The sequence spans 274 residues: Diaminopimelate epimerase (274 aa).

Residues N11, Q44, and N64 each contribute to the substrate site. The active-site Proton donor is C73. Residues G74–N75, N157, N190, and E208–R209 each bind substrate. C217 functions as the Proton acceptor in the catalytic mechanism. A substrate-binding site is contributed by G218–S219.

Belongs to the diaminopimelate epimerase family. In terms of assembly, homodimer.

It localises to the cytoplasm. It catalyses the reaction (2S,6S)-2,6-diaminopimelate = meso-2,6-diaminopimelate. The protein operates within amino-acid biosynthesis; L-lysine biosynthesis via DAP pathway; DL-2,6-diaminopimelate from LL-2,6-diaminopimelate: step 1/1. Functionally, catalyzes the stereoinversion of LL-2,6-diaminopimelate (L,L-DAP) to meso-diaminopimelate (meso-DAP), a precursor of L-lysine and an essential component of the bacterial peptidoglycan. The sequence is that of Diaminopimelate epimerase from Pectobacterium carotovorum subsp. carotovorum (strain PC1).